A 103-amino-acid chain; its full sequence is Small ribosomal subunit protein uS10 (103 aa).

It belongs to the universal ribosomal protein uS10 family. In terms of assembly, part of the 30S ribosomal subunit.

In terms of biological role, involved in the binding of tRNA to the ribosomes. The protein is Small ribosomal subunit protein uS10 of Neisseria gonorrhoeae.